Here is a 178-residue protein sequence, read N- to C-terminus: Disulfide bond formation protein B (178 aa).

Over 1 to 14 (MLSFFKTLSTKRSA) the chain is Cytoplasmic. Residues 15 to 31 (WFLLFSSALLLEAIALY) form a helical membrane-spanning segment. At 32–49 (FQHGMGLAPCVMCIYERV) the chain is on the periplasmic side. Cys-41 and Cys-44 form a disulfide bridge. The chain crosses the membrane as a helical span at residues 50–65 (AILGIAFSGLLGLLYP). Residues 66 to 72 (SSMLLRL) are Cytoplasmic-facing. Residues 73–90 (VALLIGLSSAIKGLMISI) form a helical membrane-spanning segment. The Periplasmic segment spans residues 91-145 (THLDLQLYPAPWKQCSAVAEFPETLPLDQWFPALFLPSGSCSEVTWQFLGFSMVQ). Cys-105 and Cys-131 are joined by a disulfide. A helical membrane pass occupies residues 146–164 (WIVVIFALYTLLLALIFIS). The Cytoplasmic portion of the chain corresponds to 165-177 (QVKRLKPKQRRLF).

The protein belongs to the DsbB family.

It localises to the cell inner membrane. In terms of biological role, required for disulfide bond formation in some periplasmic proteins. Acts by oxidizing the DsbA protein. The sequence is that of Disulfide bond formation protein B from Pasteurella multocida (strain Pm70).